A 538-amino-acid chain; its full sequence is Syncytin-1 (538 aa).

Residues 1-20 (MALPYHIFLFTVLLPSFTLT) form the signal peptide. Residues 21–443 (APPPCRCMTS…NIGPWGLFSQ (423 aa)) lie on the Extracellular side of the membrane. An N-linked (GlcNAc...) asparagine glycan is attached at Asn-169. Positions 186 to 189 (CWMC) match the CXXC motif. Cystine bridges form between Cys-186–Cys-189, Cys-186–Cys-405, and Cys-397–Cys-404. N-linked (GlcNAc...) asparagine glycans are attached at residues Asn-208, Asn-214, Asn-234, Asn-242, Asn-245, and Asn-281. The interval 320–340 (ILPFVMAAGVLGALGTGIGGI) is fusion peptide. The tract at residues 380–396 (LQNRRALDLLTAERGGT) is immunosuppression. Positions 397 to 405 (CLFLGEECC) match the CX6CC motif. Asn-409 carries N-linked (GlcNAc...) asparagine glycosylation. A helical transmembrane segment spans residues 444–464 (WMPWILPFLGPLAAIILLLLF). An essential for the fusiogenic function region spans residues 465–484 (GPCIFNLLVNFVSSRIEAVK). The Cytoplasmic segment spans residues 465-538 (GPCIFNLLVN…LLRPNSAGSS (74 aa)). The interval 501 to 538 (PLDWPASPRSDVNDIKGTPPEEISTAQPLLRPNSAGSS) is disordered.

This sequence belongs to the gamma type-C retroviral envelope protein family. HERV class-I W env subfamily. In terms of assembly, the mature envelope protein (Env) consists of a trimer of SU-TM heterodimers attached probably by a labile interchain disulfide bond. Interacts with the C-type lectin CD209/DC-SIGN. Post-translationally, specific enzymatic cleavages in vivo yield mature proteins. Envelope glycoproteins are synthesized as an inactive precursor that is heavily N-glycosylated and processed likely by furin in the Golgi to yield the mature SU and TM proteins. The cleavage site between SU and TM requires the minimal sequence [KR]-X-[KR]-R. The CXXC motif is highly conserved across a broad range of retroviral envelope proteins. It is thought to participate in the formation of a labile disulfide bond possibly with the CX6CC motif present in the transmembrane protein.

The protein localises to the cell membrane. It is found in the virion. In terms of biological role, this endogenous retroviral envelope protein has retained its original fusogenic properties and participates in trophoblast fusion and the formation of a syncytium during placenta morphogenesis. May recognize and induce fusion through binding of SLC1A4 and SLC1A5. Endogenous envelope proteins may have kept, lost or modified their original function during evolution. Retroviral envelope proteins mediate receptor recognition and membrane fusion during early infection. The surface protein (SU) mediates receptor recognition, while the transmembrane protein (TM) acts as a class I viral fusion protein. The protein may have at least 3 conformational states: pre-fusion native state, pre-hairpin intermediate state, and post-fusion hairpin state. During viral and target cell membrane fusion, the coiled coil regions (heptad repeats) assume a trimer-of-hairpins structure, positioning the fusion peptide in close proximity to the C-terminal region of the ectodomain. The formation of this structure appears to drive apposition and subsequent fusion of membranes. In Pongo pygmaeus (Bornean orangutan), this protein is Syncytin-1 (ERVW-1).